The chain runs to 169 residues: Cuticle protein 21 (169 aa).

Repeat copies occupy residues 21–24 (AAPV), 27–30 (AAPA), 33–36 (AAPV), 39–42 (AAPA), 47–50 (AAPV), and 53–56 (AAPA). One can recognise a Chitin-binding type R&amp;R domain in the interval 65–135 (NPQYSYAYNV…KEAGAHPAPV (71 aa)). Repeat copies occupy residues 140–143 (AAPV), 146–149 (AAPA), and 160–163 (AAPA).

In terms of biological role, component of the cuticle of migratory locust which contains more than 100 different structural proteins. This Locusta migratoria (Migratory locust) protein is Cuticle protein 21 (ACP21).